Reading from the N-terminus, the 338-residue chain is Ketol-acid reductoisomerase (NADP(+)) (338 aa).

One can recognise a KARI N-terminal Rossmann domain in the interval methionine 1–threonine 181. Residues tyrosine 24–glutamine 27, arginine 47, and serine 52 each bind NADP(+). Histidine 107 is an active-site residue. Glycine 133 is a binding site for NADP(+). Residues asparagine 182–isoleucine 327 enclose the KARI C-terminal knotted domain. The Mg(2+) site is built by aspartate 190, glutamate 194, glutamate 226, and glutamate 230. A substrate-binding site is contributed by serine 251.

It belongs to the ketol-acid reductoisomerase family. Mg(2+) is required as a cofactor.

It carries out the reaction (2R)-2,3-dihydroxy-3-methylbutanoate + NADP(+) = (2S)-2-acetolactate + NADPH + H(+). The catalysed reaction is (2R,3R)-2,3-dihydroxy-3-methylpentanoate + NADP(+) = (S)-2-ethyl-2-hydroxy-3-oxobutanoate + NADPH + H(+). The protein operates within amino-acid biosynthesis; L-isoleucine biosynthesis; L-isoleucine from 2-oxobutanoate: step 2/4. Its pathway is amino-acid biosynthesis; L-valine biosynthesis; L-valine from pyruvate: step 2/4. Its function is as follows. Involved in the biosynthesis of branched-chain amino acids (BCAA). Catalyzes an alkyl-migration followed by a ketol-acid reduction of (S)-2-acetolactate (S2AL) to yield (R)-2,3-dihydroxy-isovalerate. In the isomerase reaction, S2AL is rearranged via a Mg-dependent methyl migration to produce 3-hydroxy-3-methyl-2-ketobutyrate (HMKB). In the reductase reaction, this 2-ketoacid undergoes a metal-dependent reduction by NADPH to yield (R)-2,3-dihydroxy-isovalerate. This Methylibium petroleiphilum (strain ATCC BAA-1232 / LMG 22953 / PM1) protein is Ketol-acid reductoisomerase (NADP(+)).